Reading from the N-terminus, the 610-residue chain is T-cell immunomodulatory protein (610 aa).

Positions 1-32 are cleaved as a signal peptide; sequence MAAGLLPSARAVLALLFLGLALLSVGPAPAQA. Residues N35, N94, N123, N138, N145, N150, N175, and N241 are each glycosylated (N-linked (GlcNAc...) asparagine). The FG-GAP 1; atypical repeat unit spans residues 98–135; the sequence is LVTSVVPGDYDGDSQMDVLLTYFPQNHSNNELGAVIFW. One copy of the FG-GAP 2; atypical repeat lies at 153–183; the sequence is FHDQPLIMDFNGDLIPDVFAITNESSQPQIL. The FG-GAP 3; atypical repeat unit spans residues 256-291; it reads VVGQSAFADFDGDGHMDHLLPGCEDKDCQKSAIYLM. Residues N351, N369, and N480 are each glycosylated (N-linked (GlcNAc...) asparagine). The helical transmembrane segment at 564-584 threads the bilayer; the sequence is IVLLTAVALTGVCVFILAIIA.

Belongs to the TIP family. Interacts with RUVBL1, RUVBL2 and alpha-tubulin.

The protein resides in the secreted. It localises to the cell membrane. Modulator of T-cell function. Has a protective effect in graft versus host disease model. This is T-cell immunomodulatory protein from Rattus norvegicus (Rat).